A 463-amino-acid polypeptide reads, in one-letter code: Cysteine--tRNA ligase (463 aa).

Cysteine 29 is a Zn(2+) binding site. Positions 31-41 match the 'HIGH' region motif; that stretch reads MTIYDLCHIGH. Zn(2+)-binding residues include cysteine 218, histidine 243, and glutamate 247. The 'KMSKS' region signature appears at 275–279; it reads KMSKS. Position 278 (lysine 278) interacts with ATP.

The protein belongs to the class-I aminoacyl-tRNA synthetase family. In terms of assembly, monomer. It depends on Zn(2+) as a cofactor.

Its subcellular location is the cytoplasm. The catalysed reaction is tRNA(Cys) + L-cysteine + ATP = L-cysteinyl-tRNA(Cys) + AMP + diphosphate. The protein is Cysteine--tRNA ligase of Polaromonas naphthalenivorans (strain CJ2).